A 449-amino-acid polypeptide reads, in one-letter code: Tubulin alpha-1C chain (449 aa).

The MREC motif motif lies at 1–4 (MREC). A GTP-binding site is contributed by Q11. K40 carries the post-translational modification N6-acetyllysine. Residues E71, S140, G144, T145, T179, N206, and N228 each contribute to the GTP site. Mg(2+) is bound at residue E71. The active site involves E254. Y282 bears the 3'-nitrotyrosine mark. At Y432 the chain carries Phosphotyrosine. S439 is modified (phosphoserine). Y449 bears the 3'-nitrotyrosine mark.

It belongs to the tubulin family. As to quaternary structure, dimer of alpha and beta chains. A typical microtubule is a hollow water-filled tube with an outer diameter of 25 nm and an inner diameter of 15 nM. Alpha-beta heterodimers associate head-to-tail to form protofilaments running lengthwise along the microtubule wall with the beta-tubulin subunit facing the microtubule plus end conferring a structural polarity. Microtubules usually have 13 protofilaments but different protofilament numbers can be found in some organisms and specialized cells. The cofactor is Mg(2+). In terms of processing, some glutamate residues at the C-terminus are polyglycylated, resulting in polyglycine chains on the gamma-carboxyl group. Glycylation is mainly limited to tubulin incorporated into axonemes (cilia and flagella) whereas glutamylation is prevalent in neuronal cells, centrioles, axonemes, and the mitotic spindle. Both modifications can coexist on the same protein on adjacent residues, and lowering polyglycylation levels increases polyglutamylation, and reciprocally. Cilia and flagella glycylation is required for their stability and maintenance. Flagella glycylation controls sperm motility. Some glutamate residues at the C-terminus are polyglutamylated, resulting in polyglutamate chains on the gamma-carboxyl group. Polyglutamylation plays a key role in microtubule severing by spastin (SPAST). SPAST preferentially recognizes and acts on microtubules decorated with short polyglutamate tails: severing activity by SPAST increases as the number of glutamates per tubulin rises from one to eight, but decreases beyond this glutamylation threshold. Glutamylation is also involved in cilia motility. Post-translationally, acetylation of alpha chains at Lys-40 is located inside the microtubule lumen. This modification has been correlated with increased microtubule stability, intracellular transport and ciliary assembly. In terms of processing, methylation of alpha chains at Lys-40 is found in mitotic microtubules and is required for normal mitosis and cytokinesis contributing to genomic stability. Nitration of Tyr-449 is irreversible and interferes with normal dynein intracellular distribution. Post-translationally, undergoes a tyrosination/detyrosination cycle, the cyclic removal and re-addition of a C-terminal tyrosine residue by the enzymes tubulin tyrosine carboxypeptidase (MATCAP1, VASH1 or VASH2) and tubulin tyrosine ligase (TTL), respectively. In terms of processing, tyrosination promotes microtubule interaction with CAP-Gly domain-containing proteins such as CLIP1, CLIP2 and DCTN1. Tyrosination regulates the initiation of dynein-dynactin motility via interaction with DCTN1, which brings the dynein-dynactin complex into contact with microtubules. In neurons, tyrosinated tubulins mediate the initiation of retrograde vesicle transport. Detyrosination is involved in metaphase plate congression by guiding chromosomes during mitosis: detyrosination promotes interaction with CENPE, promoting pole-proximal transport of chromosomes toward the equator. Detyrosination increases microtubules-dependent mechanotransduction in dystrophic cardiac and skeletal muscle. In cardiomyocytes, detyrosinated microtubules are required to resist to contractile compression during contraction: detyrosination promotes association with desmin (DES) at force-generating sarcomeres, leading to buckled microtubules and mechanical resistance to contraction.

The protein localises to the cytoplasm. It localises to the cytoskeleton. The enzyme catalyses GTP + H2O = GDP + phosphate + H(+). Tubulin is the major constituent of microtubules, a cylinder consisting of laterally associated linear protofilaments composed of alpha- and beta-tubulin heterodimers. Microtubules grow by the addition of GTP-tubulin dimers to the microtubule end, where a stabilizing cap forms. Below the cap, tubulin dimers are in GDP-bound state, owing to GTPase activity of alpha-tubulin. The sequence is that of Tubulin alpha-1C chain (Tuba1c) from Rattus norvegicus (Rat).